The sequence spans 150 residues: Endoribonuclease YbeY (150 aa).

Positions 113, 117, and 123 each coordinate Zn(2+).

The protein belongs to the endoribonuclease YbeY family. Zn(2+) serves as cofactor.

The protein resides in the cytoplasm. In terms of biological role, single strand-specific metallo-endoribonuclease involved in late-stage 70S ribosome quality control and in maturation of the 3' terminus of the 16S rRNA. The sequence is that of Endoribonuclease YbeY from Malacoplasma penetrans (strain HF-2) (Mycoplasma penetrans).